Here is a 58-residue protein sequence, read N- to C-terminus: Large ribosomal subunit protein uL30 (58 aa).

It belongs to the universal ribosomal protein uL30 family. As to quaternary structure, part of the 50S ribosomal subunit.

This is Large ribosomal subunit protein uL30 from Acinetobacter baumannii (strain AB307-0294).